A 60-amino-acid polypeptide reads, in one-letter code: ATP synthase subunit J, mitochondrial (60 aa).

The helical transmembrane segment at 13–32 (ILKPMLPFFLGGAIVFYGTV) threads the bilayer.

This sequence belongs to the ATPase j subunit family. As to quaternary structure, F-type ATPases have 2 components, CF(1) - the catalytic core - and CF(0) - the membrane proton channel. In yeast, the dimeric form of ATP synthase consists of 17 polypeptides: alpha, beta, gamma, delta, epsilon, 4 (B), 5 (OSCP), 6 (A), 8, 9 (C), d, E (Tim11), f, g, h, i/j and k.

The protein resides in the mitochondrion membrane. Mitochondrial membrane ATP synthase (F(1)F(0) ATP synthase or Complex V) produces ATP from ADP in the presence of a proton gradient across the membrane which is generated by electron transport complexes of the respiratory chain. F-type ATPases consist of two structural domains, F(1) - containing the extramembraneous catalytic core and F(0) - containing the membrane proton channel, linked together by a central stalk and a peripheral stalk. During catalysis, ATP synthesis in the catalytic domain of F(1) is coupled via a rotary mechanism of the central stalk subunits to proton translocation. Part of the complex F(0) domain. Minor subunit located with subunit a in the membrane. This chain is ATP synthase subunit J, mitochondrial (atp18), found in Schizosaccharomyces pombe (strain 972 / ATCC 24843) (Fission yeast).